We begin with the raw amino-acid sequence, 200 residues long: 3-isopropylmalate dehydratase small subunit (200 aa).

The protein belongs to the LeuD family. LeuD type 1 subfamily. In terms of assembly, heterodimer of LeuC and LeuD.

It carries out the reaction (2R,3S)-3-isopropylmalate = (2S)-2-isopropylmalate. It functions in the pathway amino-acid biosynthesis; L-leucine biosynthesis; L-leucine from 3-methyl-2-oxobutanoate: step 2/4. Catalyzes the isomerization between 2-isopropylmalate and 3-isopropylmalate, via the formation of 2-isopropylmaleate. This Pectobacterium atrosepticum (strain SCRI 1043 / ATCC BAA-672) (Erwinia carotovora subsp. atroseptica) protein is 3-isopropylmalate dehydratase small subunit.